The following is a 723-amino-acid chain: Polyribonucleotide nucleotidyltransferase (723 aa).

Residues Asp488 and Asp494 each coordinate Mg(2+). A KH domain is found at Pro555–Ile614. Positions Gly624–Lys692 constitute an S1 motif domain. The interval Lys692 to Lys723 is disordered. Positions Ala693–Lys723 are enriched in basic and acidic residues.

The protein belongs to the polyribonucleotide nucleotidyltransferase family. Requires Mg(2+) as cofactor.

Its subcellular location is the cytoplasm. It catalyses the reaction RNA(n+1) + phosphate = RNA(n) + a ribonucleoside 5'-diphosphate. Functionally, involved in mRNA degradation. Catalyzes the phosphorolysis of single-stranded polyribonucleotides processively in the 3'- to 5'-direction. This chain is Polyribonucleotide nucleotidyltransferase, found in Listeria monocytogenes serotype 4a (strain HCC23).